The following is a 189-amino-acid chain: uncharacterized protein (189 aa).

In terms of domain architecture, HTH tetR-type spans 9–69; it reads ADTGGRILRA…SMLTSHIADV (61 aa). Residues 32–51 constitute a DNA-binding region (H-T-H motif); the sequence is TLAEIARRAGVSRPTVYRRW.

This is an uncharacterized protein from Mycobacterium tuberculosis (strain CDC 1551 / Oshkosh).